Consider the following 179-residue polypeptide: Transcription factor 21 (179 aa).

Residues 23–87 (IKLDPNKEFG…QVQRNAANAR (65 aa)) are disordered. Polar residues predominate over residues 34 to 46 (SNDSNEESSTCDN). Residues 50–64 (KKGRGTSGKRRKAPS) are compositionally biased toward basic residues. Polar residues predominate over residues 70–80 (GNINQEGKQVQ). One can recognise a bHLH domain in the interval 79–131 (VQRNAANARERARMRVLSKAFSRLKTTLPWVPPDTKLSKLDTLRLASSYIAHL).

Efficient DNA binding requires dimerization with another bHLH protein.

The protein localises to the nucleus. In terms of biological role, involved in epithelial-mesenchymal interactions in kidney and lung morphogenesis that include epithelial differentiation and branching morphogenesis. In Xenopus tropicalis (Western clawed frog), this protein is Transcription factor 21 (tcf21).